The primary structure comprises 508 residues: tRNA (guanine(37)-N(1))-methyltransferase (508 aa).

The N-terminal 53 residues, 1–53 (MKFNFWKGLWKPKSLTPTLSHRLYRRMYTPQPPLNREMTVLDRSKFTVSLNLA), are a transit peptide targeting the mitochondrion. Residue His253 participates in S-adenosyl-L-methionine binding. Residues 267 to 284 (RERKQQERAKRENHEKST) show a composition bias toward basic and acidic residues. The disordered stretch occupies residues 267 to 291 (RERKQQERAKRENHEKSTETAVEPD). S-adenosyl-L-methionine contacts are provided by residues 323-324 (DL), 351-352 (DG), and Asn402.

The protein belongs to the class I-like SAM-binding methyltransferase superfamily. TRM5/TYW2 family. In terms of assembly, monomer.

It is found in the mitochondrion matrix. Its subcellular location is the nucleus. The protein resides in the cytoplasm. The enzyme catalyses guanosine(37) in tRNA + S-adenosyl-L-methionine = N(1)-methylguanosine(37) in tRNA + S-adenosyl-L-homocysteine + H(+). Functionally, specifically methylates the N1 position of guanosine-37 in various cytoplasmic and mitochondrial tRNAs. Methylation is not dependent on the nature of the nucleoside 5' of the target nucleoside. This is the first step in the biosynthesis of wybutosine (yW), a modified base adjacent to the anticodon of tRNAs and required for accurate decoding. This chain is tRNA (guanine(37)-N(1))-methyltransferase, found in Yarrowia lipolytica (strain CLIB 122 / E 150) (Yeast).